The chain runs to 58 residues: uncharacterized protein (58 aa).

Over residues 23–51 (TTTSTSTTTTSTTTSTTTSTTTTTTTTTT) the composition is skewed to low complexity. The tract at residues 23-58 (TTTSTSTTTTSTTTSTTTSTTTTTTTTTTKDFNTET) is disordered.

This is an uncharacterized protein from Dictyostelium discoideum (Social amoeba).